Consider the following 384-residue polypeptide: Gibberellin 3-beta-dioxygenase 1 (384 aa).

The region spanning 225 to 327 (TLTSTIHLNM…RISMPYFLGP (103 aa)) is the Fe2OG dioxygenase domain. Residues His250, Asp252, and His308 each coordinate Fe cation. 2-oxoglutarate is bound by residues Arg318 and Ser320.

This sequence belongs to the iron/ascorbate-dependent oxidoreductase family. L-ascorbate serves as cofactor. The cofactor is Fe(2+). Expressed in unopened flowers.

It catalyses the reaction gibberellin A20 + 2-oxoglutarate + O2 = gibberellin A1 + succinate + CO2. Its pathway is plant hormone biosynthesis; gibberellin biosynthesis. In terms of biological role, catalyzes the 3-beta-hydroxylation of the inactive gibberellin precursors, leading to the formation of bioactive gibberellins. In vitro, converts the precursors GA20, GA5, GA44 and GA9 to the corresponding 3-beta-hydroxylated bioactive products GA1, GA3, GA38 and GA4, respectively. Involved in the production of bioactive GA for vegetative growth and development. May possess 2,3-desaturase activity, catalyzing the conversion of GA9 to 2,3-dehydro-GA9, and GA20 to GA5 (2,3-dehydro GA20). May possess 2-beta-hydroxylase activity, catalyzing the conversion of GA1 and GA4 to the corresponding 2-beta-hydroxylated products GA8 and GA34, respectively. The protein is Gibberellin 3-beta-dioxygenase 1 of Oryza sativa subsp. japonica (Rice).